Here is a 144-residue protein sequence, read N- to C-terminus: Large ribosomal subunit protein uL13 (144 aa).

It belongs to the universal ribosomal protein uL13 family. In terms of assembly, part of the 50S ribosomal subunit.

In terms of biological role, this protein is one of the early assembly proteins of the 50S ribosomal subunit, although it is not seen to bind rRNA by itself. It is important during the early stages of 50S assembly. The polypeptide is Large ribosomal subunit protein uL13 (Mesomycoplasma hyopneumoniae (strain 232) (Mycoplasma hyopneumoniae)).